A 426-amino-acid chain; its full sequence is Outer capsid protein P8 (426 aa).

It belongs to the phytoreovirus outer capsid protein P8 family. Homotrimer. Homomultimer.

It localises to the virion. The protein localises to the host cytoplasm. Capsid protein which self-assembles to form the outer icosahedral capsid with a T=13 symmetry, about 70 nm in diameter and consisting of 260 P8 trimers. Mediates the secretion of assembled virus-like particles from host insect cells. The chain is Outer capsid protein P8 from Nephotettix cincticeps (Green rice leafhopper).